A 92-amino-acid polypeptide reads, in one-letter code: Cell division topological specificity factor (92 aa).

It belongs to the MinE family.

Prevents the cell division inhibition by proteins MinC and MinD at internal division sites while permitting inhibition at polar sites. This ensures cell division at the proper site by restricting the formation of a division septum at the midpoint of the long axis of the cell. This is Cell division topological specificity factor from Desulforamulus reducens (strain ATCC BAA-1160 / DSM 100696 / MI-1) (Desulfotomaculum reducens).